The chain runs to 141 residues: Small ribosomal subunit protein bS6 (141 aa).

The disordered stretch occupies residues 97-141; the sequence is TGQSEMLKAEENRSERRERRDRPEHSDSADGDDGDNSDVSDNADE. A compositionally biased stretch (basic and acidic residues) spans 103–124; the sequence is LKAEENRSERRERRDRPEHSDS. Acidic residues predominate over residues 125 to 141; that stretch reads ADGDDGDNSDVSDNADE.

The protein belongs to the bacterial ribosomal protein bS6 family.

Its function is as follows. Binds together with bS18 to 16S ribosomal RNA. This Pseudomonas syringae pv. syringae (strain B728a) protein is Small ribosomal subunit protein bS6.